Reading from the N-terminus, the 201-residue chain is Cell division protein SepF (201 aa).

Basic and acidic residues predominate over residues 27–38; sequence VQERTSVQRDSR. Residues 27–99 form a disordered region; sequence VQERTSVQRD…PRVQNKDSVR (73 aa). Residues 43–54 show a composition bias toward polar residues; the sequence is QEASQRSHMTNS. Over residues 72-81 the composition is skewed to basic and acidic residues; sequence NRQERQRVQR. Positions 83-92 are enriched in polar residues; sequence NAYQQATPRV.

This sequence belongs to the SepF family. As to quaternary structure, homodimer. Interacts with FtsZ.

It is found in the cytoplasm. Functionally, cell division protein that is part of the divisome complex and is recruited early to the Z-ring. Probably stimulates Z-ring formation, perhaps through the cross-linking of FtsZ protofilaments. Its function overlaps with FtsA. The chain is Cell division protein SepF from Streptococcus agalactiae serotype Ia (strain ATCC 27591 / A909 / CDC SS700).